Reading from the N-terminus, the 103-residue chain is MPKRKVAASRGGREEVPKRRSARLSAKPVPDKAEPKAKALAAKDKSENKKAQSKGKKGPKGKQTEETNQEQIKDNLPAENGETKSEETPASDAAVEKEEVKSE.

Residues 1–103 (MPKRKVAASR…AVEKEEVKSE (103 aa)) are disordered. The segment covering 29 to 50 (VPDKAEPKAKALAAKDKSENKK) has biased composition (basic and acidic residues). Basic residues predominate over residues 51 to 60 (AQSKGKKGPK). The span at 94–103 (AVEKEEVKSE) shows a compositional bias: basic and acidic residues.

The protein belongs to the HMGN family.

Its subcellular location is the nucleus. Its function is as follows. Binds to the inner side of the nucleosomal DNA thus altering the interaction between the DNA and the histone octamer. May be involved in the process which maintains transcribable genes in a unique chromatin conformation. The sequence is that of Non-histone chromosomal protein HMG-14B (HMG14) from Gallus gallus (Chicken).